The chain runs to 178 residues: Small ribosomal subunit protein uS5 (178 aa).

Residues 15–78 (FEEKIIEIRR…SAAKRNIVEV (64 aa)) form the S5 DRBM domain.

Belongs to the universal ribosomal protein uS5 family. Part of the 30S ribosomal subunit. Contacts proteins S4 and S8.

Functionally, with S4 and S12 plays an important role in translational accuracy. Located at the back of the 30S subunit body where it stabilizes the conformation of the head with respect to the body. In Thermotoga maritima (strain ATCC 43589 / DSM 3109 / JCM 10099 / NBRC 100826 / MSB8), this protein is Small ribosomal subunit protein uS5.